The sequence spans 361 residues: Chorismate synthase (361 aa).

Residues R48 and R54 each contribute to the NADP(+) site. FMN-binding positions include 125-127 (RSS), 238-239 (NA), G278, 293-297 (KPTSS), and R319.

Belongs to the chorismate synthase family. In terms of assembly, homotetramer. Requires FMNH2 as cofactor.

The enzyme catalyses 5-O-(1-carboxyvinyl)-3-phosphoshikimate = chorismate + phosphate. The protein operates within metabolic intermediate biosynthesis; chorismate biosynthesis; chorismate from D-erythrose 4-phosphate and phosphoenolpyruvate: step 7/7. Its function is as follows. Catalyzes the anti-1,4-elimination of the C-3 phosphate and the C-6 proR hydrogen from 5-enolpyruvylshikimate-3-phosphate (EPSP) to yield chorismate, which is the branch point compound that serves as the starting substrate for the three terminal pathways of aromatic amino acid biosynthesis. This reaction introduces a second double bond into the aromatic ring system. The polypeptide is Chorismate synthase (Yersinia pseudotuberculosis serotype IB (strain PB1/+)).